The sequence spans 292 residues: MQQLIEKASTLMEALPYIRRFSGKTIVIKYGGHAMADEKLRKSFALDVILLKYIGINTVVVHGGGPQINETLKRYGIVSEFVKGMRVTDKETMGVVEMVLTGQVNREVVGYINQNGGRAAGLSGKDGDLLICEKLLQEVKSEDGSTETVDIGFVGDVVEVNPAILQALEKGGFIPVIAPVGVGRAGESYNINADVVAGKVAAALNAEKLILLTDVSGVKSKEGELLSSIPLAEVPALIDNGTVTGGMIPKVTCCTDALAAGVKKAHIVDGRIEHAILLEIFTNVGIGTEIQA.

Substrate is bound by residues 64–65 (GG), Arg-86, and Asn-190.

The protein belongs to the acetylglutamate kinase family. ArgB subfamily.

The protein localises to the cytoplasm. It carries out the reaction N-acetyl-L-glutamate + ATP = N-acetyl-L-glutamyl 5-phosphate + ADP. It participates in amino-acid biosynthesis; L-arginine biosynthesis; N(2)-acetyl-L-ornithine from L-glutamate: step 2/4. Its function is as follows. Catalyzes the ATP-dependent phosphorylation of N-acetyl-L-glutamate. This chain is Acetylglutamate kinase, found in Geobacter sp. (strain M21).